The following is a 336-amino-acid chain: Ferredoxin--NADP reductase (336 aa).

Positions 18, 37, 45, 50, 92, 127, 290, and 331 each coordinate FAD.

It belongs to the ferredoxin--NADP reductase type 2 family. In terms of assembly, homodimer. It depends on FAD as a cofactor.

It carries out the reaction 2 reduced [2Fe-2S]-[ferredoxin] + NADP(+) + H(+) = 2 oxidized [2Fe-2S]-[ferredoxin] + NADPH. This chain is Ferredoxin--NADP reductase, found in Symbiobacterium thermophilum (strain DSM 24528 / JCM 14929 / IAM 14863 / T).